Consider the following 375-residue polypeptide: Antichymotrypsin-2 (375 aa).

This sequence belongs to the serpin family. As to expression, hemolymph.

It localises to the secreted. In Bombyx mori (Silk moth), this protein is Antichymotrypsin-2.